The following is a 452-amino-acid chain: Phosphoglucosamine mutase 2 (452 aa).

Ser-101 acts as the Phosphoserine intermediate in catalysis. Mg(2+) is bound by residues Ser-101, Asp-245, Asp-247, and Asp-249. Phosphoserine is present on Ser-101.

It belongs to the phosphohexose mutase family. It depends on Mg(2+) as a cofactor. In terms of processing, activated by phosphorylation.

The enzyme catalyses alpha-D-glucosamine 1-phosphate = D-glucosamine 6-phosphate. Catalyzes the conversion of glucosamine-6-phosphate to glucosamine-1-phosphate. This Shewanella amazonensis (strain ATCC BAA-1098 / SB2B) protein is Phosphoglucosamine mutase 2.